A 648-amino-acid chain; its full sequence is TBC1 domain family member 17 (648 aa).

The interval 218-309 (DPYSTTFSSF…PELKNRIFSG (92 aa)) is required for interaction with OPTN. Residues 240–259 (PQPEGAASDLPPPPDDEPEP) form a disordered region. One can recognise a Rab-GAP TBC domain in the interval 310-520 (GLSPSLRREA…RLWEVLWTGL (211 aa)). The segment at 594–648 (LAPPAEPHSPSPTASPLPLSPTRAPPTPPPSTDTAPQPDSSLEILPEEEDEGADS) is disordered. Pro residues predominate over residues 597 to 624 (PAEPHSPSPTASPLPLSPTRAPPTPPPS). Residues S602 and S604 each carry the phosphoserine modification. A Phosphothreonine modification is found at T606. The residue at position 608 (S608) is a Phosphoserine. Position 615 is a phosphothreonine (T615). Positions 625-634 (TDTAPQPDSS) are enriched in low complexity. Acidic residues predominate over residues 638–648 (LPEEEDEGADS).

As to quaternary structure, interacts with OPTN; this interaction mediates TBC1D17 transient association with Rab8.

It localises to the cytoplasmic vesicle. Its subcellular location is the autophagosome. The protein resides in the cytoplasm. It is found in the recycling endosome. In terms of biological role, probable RAB GTPase-activating protein that inhibits RAB8A/B function. Reduces Rab8 recruitment to tubules emanating from the endocytic recycling compartment (ERC) and inhibits Rab8-mediated endocytic trafficking, such as that of transferrin receptor (TfR). Involved in regulation of autophagy. The protein is TBC1 domain family member 17 of Homo sapiens (Human).